We begin with the raw amino-acid sequence, 276 residues long: Undecaprenyl-diphosphatase 1 (276 aa).

The next 6 membrane-spanning stretches (helical) occupy residues 43 to 63 (RAMAFNIIIQLGAILAVVWEF), 85 to 105 (ANLLIAFLPAVVLGVIFADLI), 109 to 129 (LFNPITVAAALVVGGIVMLWA), 184 to 204 (ATEFSFFLAMPTMVGAAVYSG), 214 to 234 (ADFPVFAIGFVTAFIFAMIAV), and 254 to 274 (IVFGLVILATWQFGWVDWTAA).

The protein belongs to the UppP family.

It is found in the cell inner membrane. It catalyses the reaction di-trans,octa-cis-undecaprenyl diphosphate + H2O = di-trans,octa-cis-undecaprenyl phosphate + phosphate + H(+). In terms of biological role, catalyzes the dephosphorylation of undecaprenyl diphosphate (UPP). Confers resistance to bacitracin. In Pseudomonas fluorescens (strain Pf0-1), this protein is Undecaprenyl-diphosphatase 1.